A 1426-amino-acid polypeptide reads, in one-letter code: ABC transporter G family member 31 (1426 aa).

The ABC transporter 1 domain occupies 142–415 (LRHLRIYRGG…FAGMGFRCPE (274 aa)). 175–182 (GPPSSGKT) is an ATP binding site. The ABC transmembrane type-2 1 domain occupies 493–706 (ELLKSNFQWQ…AQNAISVNEF (214 aa)). 7 helical membrane passes run 511-531 (FIYV…MTVF), 544-564 (GIIY…NGFT), 592-612 (LPSW…WVLV), 630-650 (FLLL…MASL), 655-675 (IVAN…GGFI), 681-701 (IPAW…QNAI), and 741-761 (IGVG…TLFL). Residues 824–1076 (MCFKNINYYV…NLVEFFEAIP (253 aa)) enclose the ABC transporter 2 domain. 869–876 (GVSGAGKT) is a binding site for ATP. The 215-residue stretch at 1149 to 1363 (AQYAACLWKQ…TLYGLLTSQF (215 aa)) folds into the ABC transmembrane type-2 2 domain. 7 helical membrane passes run 1168–1188 (YTAV…TICW), 1200–1220 (IFNA…TNAT), 1245–1265 (LPFA…QSLI), 1283–1303 (FLWY…YGMM), 1313–1333 (VAPI…GFMI), 1341–1363 (WWRW…TSQF), and 1398–1418 (VVAG…ALAI).

This sequence belongs to the ABC transporter superfamily. ABCG family. PDR (TC 3.A.1.205) subfamily.

Its subcellular location is the membrane. In terms of biological role, may be a general defense protein. This is ABC transporter G family member 31 from Oryza sativa subsp. japonica (Rice).